The following is a 114-amino-acid chain: Small ribosomal subunit protein uS13m (114 aa).

The interval 92–114 (DGLPLRGQRSHTNARTSRKRIRK) is disordered.

Belongs to the universal ribosomal protein uS13 family. As to quaternary structure, part of the small ribosomal subunit.

Its subcellular location is the mitochondrion. Its function is as follows. Located at the top of the head of the small subunit, it contacts several helices of the 18S rRNA. This is Small ribosomal subunit protein uS13m (RPS13) from Oenothera berteroana (Bertero's evening primrose).